A 352-amino-acid polypeptide reads, in one-letter code: Biotin synthase (352 aa).

Positions 44–262 (NRVQVSTLLS…LAVARILMPK (219 aa)) constitute a Radical SAM core domain. 3 residues coordinate [4Fe-4S] cluster: C59, C63, and C66. Positions 103, 134, 194, and 266 each coordinate [2Fe-2S] cluster.

The protein belongs to the radical SAM superfamily. Biotin synthase family. As to quaternary structure, homodimer. It depends on [4Fe-4S] cluster as a cofactor. Requires [2Fe-2S] cluster as cofactor.

The catalysed reaction is (4R,5S)-dethiobiotin + (sulfur carrier)-SH + 2 reduced [2Fe-2S]-[ferredoxin] + 2 S-adenosyl-L-methionine = (sulfur carrier)-H + biotin + 2 5'-deoxyadenosine + 2 L-methionine + 2 oxidized [2Fe-2S]-[ferredoxin]. It participates in cofactor biosynthesis; biotin biosynthesis; biotin from 7,8-diaminononanoate: step 2/2. Functionally, catalyzes the conversion of dethiobiotin (DTB) to biotin by the insertion of a sulfur atom into dethiobiotin via a radical-based mechanism. The sequence is that of Biotin synthase from Pseudomonas putida (strain ATCC 47054 / DSM 6125 / CFBP 8728 / NCIMB 11950 / KT2440).